The following is a 606-amino-acid chain: Endonuclease 8-like 3 (606 aa).

The active-site Schiff-base intermediate with DNA; via amino nitrogen is the Val-2. A disordered region spans residues 31 to 51 (ALQGLGGPGSPPAAPGPMGTS). Residues Asn-194 and Arg-273 each coordinate DNA. An FPG-type zinc finger spans residues 249 to 283 (KVYKRPNCGQCCCKITVCRLGENNRMTYFCPHCQK). The RanBP2-type zinc finger occupies 319–348 (SEEQWTCEVCTLINKLSSKTCDACLTSRPA). Ser-451 bears the Phosphoserine mark. Residues Cys-508, His-511, Cys-534, Cys-542, Cys-555, His-557, Cys-580, and Cys-588 each contribute to the Zn(2+) site. GRF-type zinc fingers lie at residues 508 to 551 (CSKH…ADLS) and 555 to 597 (CNHG…AQNG).

The protein belongs to the FPG family.

Its subcellular location is the nucleus. It is found in the chromosome. The enzyme catalyses 2'-deoxyribonucleotide-(2'-deoxyribose 5'-phosphate)-2'-deoxyribonucleotide-DNA = a 3'-end 2'-deoxyribonucleotide-(2,3-dehydro-2,3-deoxyribose 5'-phosphate)-DNA + a 5'-end 5'-phospho-2'-deoxyribonucleoside-DNA + H(+). Functionally, DNA glycosylase which prefers single-stranded DNA (ssDNA), or partially ssDNA structures such as bubble and fork structures, to double-stranded DNA (dsDNA). Mediates interstrand cross-link repair in response to replication stress: acts by mediating DNA glycosylase activity, cleaving one of the two N-glycosyl bonds comprising the interstrand cross-link, which avoids the formation of a double-strand break but generates an abasic site that is bypassed by translesion synthesis polymerases. In vitro, displays strong glycosylase activity towards the hydantoin lesions spiroiminodihydantoin (Sp) and guanidinohydantoin (Gh) in both ssDNA and dsDNA; also recognizes FapyA, FapyG, 5-OHU, 5-OHC, 5-OHMH, Tg and 8-oxoA lesions in ssDNA. No activity on 8-oxoG detected. Also shows weak DNA-(apurinic or apyrimidinic site) lyase activity. In vivo, appears to be the primary enzyme involved in removing Sp and Gh from ssDNA in neonatal tissues. The polypeptide is Endonuclease 8-like 3 (NEIL3) (Bos taurus (Bovine)).